The primary structure comprises 170 residues: Non-classical export protein 102 (170 aa).

The Cytoplasmic portion of the chain corresponds to 1–11 (MLAIGDVILRA). One can recognise an MARVEL domain in the interval 6–141 (DVILRAFNFV…TFIFIASAIF (136 aa)). A helical transmembrane segment spans residues 12-32 (FNFVFLVIALGLTGSLAATTI). Residues 33–38 (TQHNPQ) are Extracellular-facing. The helical transmembrane segment at 39–61 (INFAVFAAAFGLLTSSFYGVFAY) threads the bilayer. Residues 62–76 (FVAAFAWPVILFVFD) are Cytoplasmic-facing. The helical transmembrane segment at 77–97 (FLNFVFTFAAATAIAAGIRAH) threads the bilayer. At 98 to 125 (SCSNQDYLDDNNIAQGSSGRCRKAQAST) the chain is on the extracellular side. Residues 126–146 (AFLYFSTFIFIASAIFSAISL) form a helical membrane-spanning segment. Over 147-170 (SKGGLFGHSSRPAPRTGVPTMSQV) the chain is Cytoplasmic.

The protein belongs to the NCE102 family.

The protein localises to the cell membrane. Involved in membrane organization. Involved in a novel pathway of export of proteins that lack a cleavable signal sequence. Non-classical export pathway also functions as an alternative clearance/detoxification pathway to eliminate damaged material, when the basic repair pathway is not sufficient. Regulates actin organization and subsequent morphogenesis and pathogenesis. The chain is Non-classical export protein 102 from Candida albicans (strain SC5314 / ATCC MYA-2876) (Yeast).